Here is a 407-residue protein sequence, read N- to C-terminus: Shaggy-related protein kinase iota (407 aa).

Positions 1–19 are enriched in low complexity; sequence MASLPLGPQPHALAPPLQL. The tract at residues 1–23 is disordered; that stretch reads MASLPLGPQPHALAPPLQLHDGD. Ala2 is subject to N-acetylalanine. The Protein kinase domain occupies 70–354; it reads YMAERVVGTG…ALEACAHPFF (285 aa). ATP-binding positions include 76–84 and Lys99; that span reads VGTGSFGIV. Asp195 serves as the catalytic Proton acceptor. Position 230 is a phosphotyrosine (Tyr230).

The protein belongs to the protein kinase superfamily. CMGC Ser/Thr protein kinase family. GSK-3 subfamily. Binds to KIB1. Interacts with BSK6. Post-translationally, autophosphorylated mainly on threonine and serine residues.

It catalyses the reaction L-seryl-[protein] + ATP = O-phospho-L-seryl-[protein] + ADP + H(+). The enzyme catalyses L-threonyl-[protein] + ATP = O-phospho-L-threonyl-[protein] + ADP + H(+). Functionally, phosphorylates BSK1, BSK3, BSK5, BSK6, BSK8 and BSK11 in vitro. May mediate extracellular signals to regulate transcription in differentiating cells. This chain is Shaggy-related protein kinase iota (ASK9), found in Arabidopsis thaliana (Mouse-ear cress).